Reading from the N-terminus, the 153-residue chain is 6,7-dimethyl-8-ribityllumazine synthase (153 aa).

5-amino-6-(D-ribitylamino)uracil contacts are provided by residues phenylalanine 21, 55–57 (AFE), and 79–81 (TVI). Residue 84–85 (AT) coordinates (2S)-2-hydroxy-3-oxobutyl phosphate. Histidine 87 acts as the Proton donor in catalysis. Residue phenylalanine 112 participates in 5-amino-6-(D-ribitylamino)uracil binding. Arginine 126 serves as a coordination point for (2S)-2-hydroxy-3-oxobutyl phosphate.

This sequence belongs to the DMRL synthase family. Forms an icosahedral capsid composed of 60 subunits, arranged as a dodecamer of pentamers.

It carries out the reaction (2S)-2-hydroxy-3-oxobutyl phosphate + 5-amino-6-(D-ribitylamino)uracil = 6,7-dimethyl-8-(1-D-ribityl)lumazine + phosphate + 2 H2O + H(+). It functions in the pathway cofactor biosynthesis; riboflavin biosynthesis; riboflavin from 2-hydroxy-3-oxobutyl phosphate and 5-amino-6-(D-ribitylamino)uracil: step 1/2. Functionally, catalyzes the formation of 6,7-dimethyl-8-ribityllumazine by condensation of 5-amino-6-(D-ribitylamino)uracil with 3,4-dihydroxy-2-butanone 4-phosphate. This is the penultimate step in the biosynthesis of riboflavin. The protein is 6,7-dimethyl-8-ribityllumazine synthase of Bacillus anthracis (strain A0248).